The sequence spans 284 residues: Diaminopimelate epimerase (284 aa).

Residues Asn-13 and Asn-70 each contribute to the substrate site. The active-site Proton donor is Cys-79. Substrate-binding positions include 80-81 (GN), Asn-167, Asn-200, and 218-219 (ER). Cys-227 (proton acceptor) is an active-site residue. Residue 228–229 (GT) participates in substrate binding.

It belongs to the diaminopimelate epimerase family. As to quaternary structure, homodimer.

The protein resides in the cytoplasm. It carries out the reaction (2S,6S)-2,6-diaminopimelate = meso-2,6-diaminopimelate. It participates in amino-acid biosynthesis; L-lysine biosynthesis via DAP pathway; DL-2,6-diaminopimelate from LL-2,6-diaminopimelate: step 1/1. Catalyzes the stereoinversion of LL-2,6-diaminopimelate (L,L-DAP) to meso-diaminopimelate (meso-DAP), a precursor of L-lysine and an essential component of the bacterial peptidoglycan. This chain is Diaminopimelate epimerase, found in Prochlorococcus marinus (strain NATL2A).